Reading from the N-terminus, the 200-residue chain is Peptidyl-tRNA hydrolase (200 aa).

Tyr-15 contributes to the tRNA binding site. His-20 functions as the Proton acceptor in the catalytic mechanism. 3 residues coordinate tRNA: Tyr-66, Asn-68, and Asn-114.

The protein belongs to the PTH family. Monomer.

The protein localises to the cytoplasm. It catalyses the reaction an N-acyl-L-alpha-aminoacyl-tRNA + H2O = an N-acyl-L-amino acid + a tRNA + H(+). Functionally, hydrolyzes ribosome-free peptidyl-tRNAs (with 1 or more amino acids incorporated), which drop off the ribosome during protein synthesis, or as a result of ribosome stalling. Catalyzes the release of premature peptidyl moieties from peptidyl-tRNA molecules trapped in stalled 50S ribosomal subunits, and thus maintains levels of free tRNAs and 50S ribosomes. The sequence is that of Peptidyl-tRNA hydrolase from Paraburkholderia phytofirmans (strain DSM 17436 / LMG 22146 / PsJN) (Burkholderia phytofirmans).